A 431-amino-acid polypeptide reads, in one-letter code: Ribosome assembly protein SQT1 (431 aa).

WD repeat units lie at residues 63 to 102 (KHTD…PKFA), 107 to 146 (GYGE…AQWK), 149 to 192 (SQMQ…GSLE), 199 to 243 (VHQQ…QLFK), 309 to 348 (ELDA…VRHK), and 350 to 387 (VLED…EKFV).

Interacts strongly with QSR1. Part of an oligomeric protein complex that is loosely associated with ribosomes.

Its function is as follows. May be involved in the late step of 60S ribosomal subunit assembly or modification in the cytoplasm. This Saccharomyces cerevisiae (strain ATCC 204508 / S288c) (Baker's yeast) protein is Ribosome assembly protein SQT1 (SQT1).